Consider the following 334-residue polypeptide: Adenine deaminase (334 aa).

The Zn(2+) site is built by His14, His16, and His194. The active-site Proton donor is Glu197. Residue Asp275 coordinates Zn(2+). A substrate-binding site is contributed by Asp276.

The protein belongs to the metallo-dependent hydrolases superfamily. Adenosine and AMP deaminases family. Adenine deaminase type 2 subfamily. It depends on Zn(2+) as a cofactor.

It catalyses the reaction adenine + H2O + H(+) = hypoxanthine + NH4(+). Catalyzes the hydrolytic deamination of adenine to hypoxanthine. Plays an important role in the purine salvage pathway and in nitrogen catabolism. This chain is Adenine deaminase, found in Hahella chejuensis (strain KCTC 2396).